The sequence spans 301 residues: UDP-N-acetylenolpyruvoylglucosamine reductase (301 aa).

An FAD-binding PCMH-type domain is found at 29-195 (KIGGPADVFV…VEAIFSLTRG (167 aa)). The active site involves arginine 174. The active-site Proton donor is serine 224. Residue glutamate 294 is part of the active site.

It belongs to the MurB family. The cofactor is FAD.

Its subcellular location is the cytoplasm. It catalyses the reaction UDP-N-acetyl-alpha-D-muramate + NADP(+) = UDP-N-acetyl-3-O-(1-carboxyvinyl)-alpha-D-glucosamine + NADPH + H(+). It participates in cell wall biogenesis; peptidoglycan biosynthesis. Cell wall formation. This chain is UDP-N-acetylenolpyruvoylglucosamine reductase, found in Halalkalibacterium halodurans (strain ATCC BAA-125 / DSM 18197 / FERM 7344 / JCM 9153 / C-125) (Bacillus halodurans).